Consider the following 150-residue polypeptide: Aspartate 1-decarboxylase (150 aa).

S24 functions as the Schiff-base intermediate with substrate; via pyruvic acid in the catalytic mechanism. Residue S24 is modified to Pyruvic acid (Ser). T56 is a binding site for substrate. Y57 serves as the catalytic Proton donor. 72 to 74 contributes to the substrate binding site; that stretch reads GAA.

Belongs to the PanD family. As to quaternary structure, heterooctamer of four alpha and four beta subunits. It depends on pyruvate as a cofactor. Post-translationally, is synthesized initially as an inactive proenzyme, which is activated by self-cleavage at a specific serine bond to produce a beta-subunit with a hydroxyl group at its C-terminus and an alpha-subunit with a pyruvoyl group at its N-terminus.

The protein resides in the cytoplasm. It catalyses the reaction L-aspartate + H(+) = beta-alanine + CO2. It functions in the pathway cofactor biosynthesis; (R)-pantothenate biosynthesis; beta-alanine from L-aspartate: step 1/1. Functionally, catalyzes the pyruvoyl-dependent decarboxylation of aspartate to produce beta-alanine. This chain is Aspartate 1-decarboxylase, found in Xanthobacter autotrophicus (strain ATCC BAA-1158 / Py2).